Here is a 291-residue protein sequence, read N- to C-terminus: Elongation factor Ts (291 aa).

Residues 84 to 87 (TDFV) form an involved in Mg(2+) ion dislocation from EF-Tu region.

The protein belongs to the EF-Ts family.

It is found in the cytoplasm. In terms of biological role, associates with the EF-Tu.GDP complex and induces the exchange of GDP to GTP. It remains bound to the aminoacyl-tRNA.EF-Tu.GTP complex up to the GTP hydrolysis stage on the ribosome. The protein is Elongation factor Ts of Bifidobacterium adolescentis (strain ATCC 15703 / DSM 20083 / NCTC 11814 / E194a).